Consider the following 109-residue polypeptide: Biphenyl dioxygenase ferredoxin subunit (109 aa).

The 97-residue stretch at 4–100 (TKACSVDEVP…IRIEGRDVLV (97 aa)) folds into the Rieske domain. [2Fe-2S] cluster-binding residues include C43, H45, C63, and H66.

It belongs to the bacterial ring-hydroxylating dioxygenase ferredoxin component family. As to quaternary structure, this dioxygenase system consists of four proteins: the two subunits of the hydroxylase component (BphA1 and BphA2), a ferredoxin (BphA3) and a ferredoxin reductase (BphA4).

In terms of biological role, this protein seems to be a 2Fe-2S ferredoxin. The chain is Biphenyl dioxygenase ferredoxin subunit (bphA3) from Pseudomonas sp. (strain KKS102).